We begin with the raw amino-acid sequence, 494 residues long: One cut domain family member 3 (494 aa).

Disordered regions lie at residues 130 to 162 (AAAVAGAHGGHPHAHPHPAAAPPPPPPPQRLAA), 199 to 239 (LSPL…GDKL), and 295 to 319 (AHGPHGGGGGPGGSGGGPSAGAAAE). Composition is skewed to pro residues over residues 148–158 (AAAPPPPPPPQ) and 214–225 (PQPPPPPPPPPL). Over residues 297–313 (GPHGGGGGPGGSGGGPS) the composition is skewed to gly residues. Positions 312–398 (PSAGAAAEEI…QRMSALRLAA (87 aa)) form a DNA-binding region, CUT. Positions 414–473 (PKKQRLVFTDLQRRTLIAIFKENKRPSKEMQVTISQQLGLELNTVSNFFMNARRRCMNRW) form a DNA-binding region, homeobox. The segment at 475 to 494 (EEPSTAPGGPAGATATFSKA) is disordered. Residues 476–494 (EPSTAPGGPAGATATFSKA) show a composition bias toward low complexity.

Belongs to the CUT homeobox family.

It localises to the nucleus. Functionally, transcriptional activator. Binds the consensus DNA sequence 5'-DHWATTGAYTWWD-3' on a variety of gene promoters such as those of HNF3B and TTR. This Homo sapiens (Human) protein is One cut domain family member 3 (ONECUT3).